Consider the following 246-residue polypeptide: RNA polymerase sigma-B factor (246 aa).

Positions 25–38 (DLIQEGNIGLMKAV) match the Polymerase core binding motif. The H-T-H motif DNA-binding region spans 201–220 (LKELGEHFGFSRERARQLEI).

The protein belongs to the sigma-70 factor family.

Its function is as follows. Sigma factors are initiation factors that promote the attachment of RNA polymerase to specific initiation sites and are then released. This sigma factor is essential for late-stage differentiation of M.xanthus. The polypeptide is RNA polymerase sigma-B factor (sigB) (Myxococcus xanthus).